The sequence spans 531 residues: SWI/SNF-related matrix-associated actin-dependent regulator of chromatin subfamily D member 2 (531 aa).

The disordered stretch occupies residues 20–85 (AVAAALGAPP…MSPGSRMPMA (66 aa)). Residues 34–45 (PGMLPSPALRGP) are compositionally biased toward low complexity. An asymmetric dimethylarginine mark is found at Arg81 and Arg104. Ser203 bears the Phosphoserine mark. The interval 205 to 226 (SKADGDNAGTAGTPGGTPAADK) is disordered. The span at 210-225 (DNAGTAGTPGGTPAAD) shows a compositional bias: low complexity. Thr217 is subject to Phosphothreonine. Residue Lys226 forms a Glycyl lysine isopeptide (Lys-Gly) (interchain with G-Cter in SUMO2) linkage. The 78-residue stretch at 306-383 (HQPPQYKLDP…PMKLAGLLQH (78 aa)) folds into the SWIB/MDM2 domain.

Belongs to the SMARCD family. As to quaternary structure, component of the multiprotein chromatin-remodeling complexes SWI/SNF: SWI/SNF-A (BAF), SWI/SNF-B (PBAF) and related complexes. The canonical complex contains a catalytic subunit (either SMARCA4/BRG1/BAF190A or SMARCA2/BRM/BAF190B), and at least SMARCE1, ACTL6A/BAF53, SMARCC1/BAF155, SMARCC2/BAF170, and SMARCB1/SNF5/BAF47. Other subunits specific to each of the complexes may also be present permitting several possible combinations developmentally and tissue specific. Component of the BAF complex, which includes at least actin (ACTB), ARID1A/BAF250A, ARID1B/BAF250B, SMARCA2/BRM, SMARCA4/BRG1, ACTL6A/BAF53, ACTL6B/BAF53B, SMARCE1/BAF57, SMARCC1/BAF155, SMARCC2/BAF170, SMARCB1/SNF5/INI1, and one or more SMARCD1/BAF60A, SMARCD2/BAF60B, or SMARCD3/BAF60C. In muscle cells, the BAF complex also contains DPF3. Component of the SWI/SNF-B (PBAF) chromatin remodeling complex, at least composed of SMARCA4/BRG1, SMARCB1/BAF47/SNF5, ACTL6A/BAF53A or ACTL6B/BAF53B, SMARCE1/BAF57, SMARCD1/BAF60A, SMARCD2/BAF60B, perhaps SMARCD3/BAF60C, SMARCC1/BAF155, SMARCC2/BAF170, PBRM1/BAF180, ARID2/BAF200 and actin (ACTB). Interacts with UNKL. Interacts with CEBPE. In terms of processing, ubiquitinated through a signaling process involving RAC1 and the RING finger protein UNKL.

It localises to the nucleus. Its function is as follows. Involved in transcriptional activation and repression of select genes by chromatin remodeling (alteration of DNA-nucleosome topology). Component of SWI/SNF chromatin remodeling complexes that carry out key enzymatic activities, changing chromatin structure by altering DNA-histone contacts within a nucleosome in an ATP-dependent manner. Critical regulator of myeloid differentiation, controlling granulocytopoiesis and the expression of genes involved in neutrophil granule formation. The chain is SWI/SNF-related matrix-associated actin-dependent regulator of chromatin subfamily D member 2 (Smarcd2) from Mus musculus (Mouse).